A 596-amino-acid polypeptide reads, in one-letter code: Bromodomain-containing protein 9 (596 aa).

The span at 1–10 (MGKKHKKHKS) shows a compositional bias: basic residues. Disordered stretches follow at residues 1-31 (MGKK…QYYV) and 49-119 (EVTE…SEGE). Residues 61–73 (SFYEDRSDHERER) show a composition bias toward basic and acidic residues. Basic residues predominate over residues 74-84 (HKEKKKKKKKK). A compositionally biased stretch (basic and acidic residues) spans 85–98 (SEKEKDKYLDEDER). A compositionally biased stretch (basic residues) spans 99–109 (RRRKEEKKRKR). One can recognise a Bromo domain in the interval 148-252 (NESTPLQQLL…HTGFKMMSKQ (105 aa)). The interval 226–228 (TYN) is histone H4K5ac H4K8ac and histone H4K5bu H4K8bu binding. Residues 537–547 (DFHDVHNDRGG) show a composition bias toward basic and acidic residues. A disordered region spans residues 537-596 (DFHDVHNDRGGSRPSSSSSVSNNSERDHHLGSPSRISVGEQQDIHDPYEFLQSPETENQN). Over residues 548–559 (SRPSSSSSVSNN) the composition is skewed to low complexity.

In terms of assembly, binds acetylated histones H3 and H4. Binds butyrylated histone H4.

Its subcellular location is the nucleus. Its function is as follows. Plays a role in chromatin remodeling and regulation of transcription. Acts as a chromatin reader that recognizes and binds acylated histones: binds histones that are acetylated and/or butyrylated. This is Bromodomain-containing protein 9 (brd9) from Xenopus tropicalis (Western clawed frog).